The following is a 558-amino-acid chain: MSFKTDAEIAQSSTMRPIGEIAAKLGLNADNIEPYGHYKAKINPAEAFKLPQKQGRLILVTAINPTPAGEGKTTVTIGLADALRHIGKDSVIALREPSLGPVFGVKGGAAGGGYAQVLPMEDINLHFTGDFHAIGAANNLLAAMLDNHIYQGNELDIDPKRVLWRRVVDMNDRQLRNIIDGMGKPVDGVMRPDGFDITVASEVMAVFCLAKDISDLKERLGNILVAYAKDGSPVYAKDLKANGAMAALLKDAIKPNLVQTIEGTPAFVHGGPFANIAHGCNSVTATRLAKHLADYAVTEAGFGADLGAEKFCDIKCRLAGLKPDAAVVVATVRALKYNGGVERANLGEENLDALEKGLPNLLKHISNLKNVFGLPVVVALNRFVSDSDAELAMIEKACAEHGVEVSLTEVWGKGGAGGADLARKVVNAIESQTNNFGFAYDVELGIKDKIRAIAQKVYGAEDVDFSAEASAEIASLEKLGLDKMPICMAKTQYSLSDNAKLLGCPEGFRIAVRGITVSAGAGFIVALCGNMMKMPGLPKVPAAEKIDVDEHGVIHGLF.

Position 66–73 (66–73) interacts with ATP; sequence TPAGEGKT.

It belongs to the formate--tetrahydrofolate ligase family.

It carries out the reaction (6S)-5,6,7,8-tetrahydrofolate + formate + ATP = (6R)-10-formyltetrahydrofolate + ADP + phosphate. It participates in one-carbon metabolism; tetrahydrofolate interconversion. The protein is Formate--tetrahydrofolate ligase of Neisseria meningitidis serogroup C (strain 053442).